Reading from the N-terminus, the 44-residue chain is Peptide Hact-4 (44 aa).

Cystine bridges form between C8–C42, C15–C34, and C20–C43.

In terms of tissue distribution, expressed in tentacles.

It localises to the nematocyst. It is found in the secreted. Peptide with unknown function. Does not exhibit antimicrobial activity against Escherichia coli and Staphylococcus aureus. Does not exhibit any effect on human ion channel TRPV1 in a Xenopus laevis oocytes assay. This Heliofungia actiniformis (Mushroom coral) protein is Peptide Hact-4.